Consider the following 59-residue polypeptide: UPF0434 protein lpg1920 (59 aa).

Belongs to the UPF0434 family.

This chain is UPF0434 protein lpg1920, found in Legionella pneumophila subsp. pneumophila (strain Philadelphia 1 / ATCC 33152 / DSM 7513).